Consider the following 131-residue polypeptide: Small ribosomal subunit protein uS11 (131 aa).

It belongs to the universal ribosomal protein uS11 family. As to quaternary structure, part of the 30S ribosomal subunit. Interacts with proteins S7 and S18. Binds to IF-3.

Functionally, located on the platform of the 30S subunit, it bridges several disparate RNA helices of the 16S rRNA. Forms part of the Shine-Dalgarno cleft in the 70S ribosome. This Wolinella succinogenes (strain ATCC 29543 / DSM 1740 / CCUG 13145 / JCM 31913 / LMG 7466 / NCTC 11488 / FDC 602W) (Vibrio succinogenes) protein is Small ribosomal subunit protein uS11.